The following is a 99-amino-acid chain: Ferredoxin (99 aa).

The region spanning 4–96 (YKIHLLCEEE…DCTISTHVEQ (93 aa)) is the 2Fe-2S ferredoxin-type domain. Residues C42, C47, C50, and C80 each contribute to the [2Fe-2S] cluster site.

The protein belongs to the 2Fe2S plant-type ferredoxin family. As to quaternary structure, forms a complex with heterodimeric ferredoxin-thioredoxin reductase (FTR) and thioredoxin. It depends on [2Fe-2S] cluster as a cofactor.

The protein resides in the plastid. It localises to the chloroplast. Ferredoxins are iron-sulfur proteins that transfer electrons in a wide variety of metabolic reactions. The polypeptide is Ferredoxin (petF) (Pyropia yezoensis (Susabi-nori)).